Here is a 907-residue protein sequence, read N- to C-terminus: Eukaryotic translation initiation factor 4 gamma 2 (907 aa).

M1 carries the N-acetylmethionine modification. The disordered stretch occupies residues 1–71 (MESAIAEGGA…SAANNSANEK (71 aa)). The residue at position 11 (S11) is a Phosphoserine. An MIF4G domain is found at 78 to 308 (FRKVRGILNK…QDTVELREHH (231 aa)). T89 carries the phosphothreonine modification. Position 360 is an omega-N-methylarginine (R360). S395 is modified (phosphoserine). The residue at position 431 (K431) is an N6-methyllysine. Residue S443 is modified to Phosphoserine. The segment at 498-541 (PPSAQPPRTQTPPLGQTPQLGLKTNPPLIQEKPAKTSKKPPPSK) is disordered. A compositionally biased stretch (polar residues) spans 503–516 (PPRTQTPPLGQTPQ). R505 is modified (omega-N-methylarginine). Residues T508 and T514 each carry the phosphothreonine modification. Positions 543–666 (ELLKLTETVV…SISELAQPLE (124 aa)) constitute an MI domain. K575 is covalently cross-linked (Glycyl lysine isopeptide (Lys-Gly) (interchain with G-Cter in SUMO2)). One can recognise a W2 domain in the interval 720-904 (EGKGLSFLFP…ETAEEEESEE (185 aa)). At S902 the chain carries Phosphoserine.

It belongs to the eukaryotic initiation factor 4G family. In terms of assembly, interacts with the serine/threonine protein kinases MKNK1 and MKNK2. Binds EIF4A and EIF3. Interacts with MIF4GD. Interacts with DAZAP2. In terms of processing, phosphorylation; hyperphosphorylated during mitosis.

Appears to play a role in the switch from cap-dependent to IRES-mediated translation during mitosis, apoptosis and viral infection. Cleaved by some caspases and viral proteases. This is Eukaryotic translation initiation factor 4 gamma 2 from Oryctolagus cuniculus (Rabbit).